Here is a 646-residue protein sequence, read N- to C-terminus: 1-deoxy-D-xylulose-5-phosphate synthase (646 aa).

Thiamine diphosphate is bound by residues H86 and 127–129 (AHS). D158 is a binding site for Mg(2+). Residues 159–160 (GA), N188, Y295, and E377 each bind thiamine diphosphate. N188 serves as a coordination point for Mg(2+).

The protein belongs to the transketolase family. DXPS subfamily. In terms of assembly, homodimer. It depends on Mg(2+) as a cofactor. Requires thiamine diphosphate as cofactor.

It catalyses the reaction D-glyceraldehyde 3-phosphate + pyruvate + H(+) = 1-deoxy-D-xylulose 5-phosphate + CO2. Its pathway is metabolic intermediate biosynthesis; 1-deoxy-D-xylulose 5-phosphate biosynthesis; 1-deoxy-D-xylulose 5-phosphate from D-glyceraldehyde 3-phosphate and pyruvate: step 1/1. Functionally, catalyzes the acyloin condensation reaction between C atoms 2 and 3 of pyruvate and glyceraldehyde 3-phosphate to yield 1-deoxy-D-xylulose-5-phosphate (DXP). This is 1-deoxy-D-xylulose-5-phosphate synthase from Burkholderia ambifaria (strain ATCC BAA-244 / DSM 16087 / CCUG 44356 / LMG 19182 / AMMD) (Burkholderia cepacia (strain AMMD)).